A 122-amino-acid chain; its full sequence is UPF0102 protein Mpe_A3766 (122 aa).

The protein belongs to the UPF0102 family.

This Methylibium petroleiphilum (strain ATCC BAA-1232 / LMG 22953 / PM1) protein is UPF0102 protein Mpe_A3766.